The following is a 352-amino-acid chain: S-adenosylmethionine:tRNA ribosyltransferase-isomerase (352 aa).

Belongs to the QueA family. Monomer.

It is found in the cytoplasm. The enzyme catalyses 7-aminomethyl-7-carbaguanosine(34) in tRNA + S-adenosyl-L-methionine = epoxyqueuosine(34) in tRNA + adenine + L-methionine + 2 H(+). It functions in the pathway tRNA modification; tRNA-queuosine biosynthesis. In terms of biological role, transfers and isomerizes the ribose moiety from AdoMet to the 7-aminomethyl group of 7-deazaguanine (preQ1-tRNA) to give epoxyqueuosine (oQ-tRNA). This is S-adenosylmethionine:tRNA ribosyltransferase-isomerase from Paraburkholderia xenovorans (strain LB400).